The primary structure comprises 199 residues: MIAVIDVSGNNLTSLTNALIRLGGHFALTHDAQEIQKASHVILPGVGTARSGMTALQQNGLIDVLRTLTQPLLGICLGMQLLLEYSEEDDIPCLGLIPGVAELLKAERNHPVPHMGWNNLHWQKTSSLQQGLNNSDYVYFVHSYALKADDYALARCRYHEEFTAVVKKGNFYGMQFHPEKSADVGMVLLNNFLSLESKC.

One can recognise a Glutamine amidotransferase type-1 domain in the interval 1-199 (MIAVIDVSGN…NNFLSLESKC (199 aa)). Residue Cys-76 is the Nucleophile of the active site. Residues His-177 and Glu-179 contribute to the active site.

Heterodimer of HisH and HisF.

The protein localises to the cytoplasm. It carries out the reaction 5-[(5-phospho-1-deoxy-D-ribulos-1-ylimino)methylamino]-1-(5-phospho-beta-D-ribosyl)imidazole-4-carboxamide + L-glutamine = D-erythro-1-(imidazol-4-yl)glycerol 3-phosphate + 5-amino-1-(5-phospho-beta-D-ribosyl)imidazole-4-carboxamide + L-glutamate + H(+). The enzyme catalyses L-glutamine + H2O = L-glutamate + NH4(+). Its pathway is amino-acid biosynthesis; L-histidine biosynthesis; L-histidine from 5-phospho-alpha-D-ribose 1-diphosphate: step 5/9. In terms of biological role, IGPS catalyzes the conversion of PRFAR and glutamine to IGP, AICAR and glutamate. The HisH subunit provides the glutamine amidotransferase activity that produces the ammonia necessary to HisF for the synthesis of IGP and AICAR. The sequence is that of Imidazole glycerol phosphate synthase subunit HisH 2 from Legionella pneumophila (strain Lens).